A 148-amino-acid polypeptide reads, in one-letter code: MITLPKISLIGSNIAKEGLEFVFAGPLAACSDCRVKNVCFNLEQGHRYRVTKVREQVNPCIIFNGDKVNTVEVEELEDYVNVQESKRIQEGAIITLKSMNCDYITCPNIEKCNLYYFKPDSKVMVKSIGKEIKCPKGYKMKQVAITYK.

Belongs to the UPF0179 family.

This Thermoplasma acidophilum (strain ATCC 25905 / DSM 1728 / JCM 9062 / NBRC 15155 / AMRC-C165) protein is UPF0179 protein Ta1159.